The following is a 289-amino-acid chain: Elongation factor Ts (289 aa).

An involved in Mg(2+) ion dislocation from EF-Tu region spans residues 82 to 85; that stretch reads TDFL.

It belongs to the EF-Ts family.

It localises to the cytoplasm. In terms of biological role, associates with the EF-Tu.GDP complex and induces the exchange of GDP to GTP. It remains bound to the aminoacyl-tRNA.EF-Tu.GTP complex up to the GTP hydrolysis stage on the ribosome. In Pseudomonas paraeruginosa (strain DSM 24068 / PA7) (Pseudomonas aeruginosa (strain PA7)), this protein is Elongation factor Ts.